Reading from the N-terminus, the 696-residue chain is Protein OS-9 homolog (696 aa).

The N-terminal stretch at 1-15 (MLVVAFASLLGAARA) is a signal peptide. N35, N46, and N68 each carry an N-linked (GlcNAc...) asparagine glycan. The MRH domain occupies 106–224 (NQCLVSQNGF…QVIVPDLCQL (119 aa)). A disulfide bridge links C108 with C121. Positions 116, 128, 178, 184, 206, and 212 each coordinate a mannooligosaccharide derivative. 2 cysteine pairs are disulfide-bonded: C177–C210 and C192–C222. N-linked (GlcNAc...) asparagine glycans are attached at residues N276, N290, and N372. Disordered regions lie at residues 450–600 (IEAS…DNSD) and 667–696 (TLGNNDGVASDVKDEEVVESDRNGVIDDEL). The segment covering 458–467 (TKASESTPVS) has biased composition (polar residues). The span at 482–498 (RSRDKEEYFKENEKQGE) shows a compositional bias: basic and acidic residues. Composition is skewed to polar residues over residues 499-518 (ENNAQVPFSAHNNEQHGTIS), 528-553 (NQKQLANTQKGDTDTPPQSSQSSAND), and 585-597 (NIDNSSGRSTLND). A glycan (N-linked (GlcNAc...) asparagine) is linked at N588. Basic and acidic residues predominate over residues 685 to 696 (ESDRNGVIDDEL).

It belongs to the OS-9 family. Interacts with missfolded ER lumenal proteins.

The protein localises to the endoplasmic reticulum membrane. Its function is as follows. Lectin involved in the quality control of the secretory pathway. As a member of the endoplasmic reticulum-associated degradation lumenal (ERAD-L) surveillance system, targets misfolded endoplasmic reticulum lumenal glycoproteins for degradation. The sequence is that of Protein OS-9 homolog (YOS9) from Candida glabrata (strain ATCC 2001 / BCRC 20586 / JCM 3761 / NBRC 0622 / NRRL Y-65 / CBS 138) (Yeast).